The following is a 122-amino-acid chain: Large ribosomal subunit protein uL14 (122 aa).

The protein belongs to the universal ribosomal protein uL14 family. Part of the 50S ribosomal subunit. Forms a cluster with proteins L3 and L19. In the 70S ribosome, L14 and L19 interact and together make contacts with the 16S rRNA in bridges B5 and B8.

Binds to 23S rRNA. Forms part of two intersubunit bridges in the 70S ribosome. This chain is Large ribosomal subunit protein uL14, found in Christiangramia forsetii (strain DSM 17595 / CGMCC 1.15422 / KT0803) (Gramella forsetii).